A 187-amino-acid chain; its full sequence is UPF0398 protein MW1336 (187 aa).

It belongs to the UPF0398 family.

The chain is UPF0398 protein MW1336 from Staphylococcus aureus (strain MW2).